A 337-amino-acid chain; its full sequence is Basic membrane protein A2 (337 aa).

The N-terminal stretch at 1–17 is a signal peptide; the sequence is MNKLLLLILFECIIFLS. Cys-18 carries the N-palmitoyl cysteine lipid modification. Cys-18 carries the S-diacylglycerol cysteine lipid modification.

This sequence belongs to the BMP lipoprotein family. Monomer.

Its subcellular location is the cell inner membrane. Immunogenic protein. May be part of an ABC-type nucleoside uptake system involved in the purine salvage pathway. This is Basic membrane protein A2 (bmpA2) from Borrelia garinii subsp. bavariensis (strain ATCC BAA-2496 / DSM 23469 / PBi) (Borreliella bavariensis).